Here is a 153-residue protein sequence, read N- to C-terminus: Pheromone-binding protein Gp-9 (153 aa).

The N-terminal stretch at 1-19 (MKTFVLHIFIFALVAFASA) is a signal peptide. Disulfide bonds link cysteine 37–cysteine 77, cysteine 73–cysteine 129, and cysteine 118–cysteine 138.

Belongs to the PBP/GOBP family. As to quaternary structure, homodimer.

The protein localises to the secreted. Functionally, colony queen number, a major feature of social organization, is associated with worker genotype for Gp-9. Colonies are headed by either a single reproductive queen (monogyne form) or multiple queens (polygyne form). Differences in worker Gp-9 genotypes between social forms may cause differences in workers' abilities to recognize queens and regulate their numbers. This is Pheromone-binding protein Gp-9 from Solenopsis pusillignis (Fire ant).